We begin with the raw amino-acid sequence, 264 residues long: NADH dehydrogenase [ubiquinone] iron-sulfur protein 3, mitochondrial (264 aa).

The transit peptide at 1 to 36 (MAAAAVARLWWRGILGASALTRGTGRPSVLLLPVRR) directs the protein to the mitochondrion.

It belongs to the complex I 30 kDa subunit family. Core subunit of respiratory chain NADH dehydrogenase (Complex I) which is composed of 45 different subunits. Interacts with NDUFAF3. Interacts with RAB5IF. Found in subcomplexes containing subunits NDUFS2, MT-ND1 and NDUFA13.

The protein localises to the mitochondrion inner membrane. It carries out the reaction a ubiquinone + NADH + 5 H(+)(in) = a ubiquinol + NAD(+) + 4 H(+)(out). Functionally, core subunit of the mitochondrial membrane respiratory chain NADH dehydrogenase (Complex I) which catalyzes electron transfer from NADH through the respiratory chain, using ubiquinone as an electron acceptor. Essential for the catalytic activity and assembly of complex I. The chain is NADH dehydrogenase [ubiquinone] iron-sulfur protein 3, mitochondrial (NDUFS3) from Homo sapiens (Human).